Reading from the N-terminus, the 470-residue chain is Uronate isomerase (470 aa).

This sequence belongs to the metallo-dependent hydrolases superfamily. Uronate isomerase family.

The enzyme catalyses D-glucuronate = D-fructuronate. It carries out the reaction aldehydo-D-galacturonate = keto-D-tagaturonate. It functions in the pathway carbohydrate metabolism; pentose and glucuronate interconversion. The sequence is that of Uronate isomerase from Vibrio parahaemolyticus serotype O3:K6 (strain RIMD 2210633).